The following is a 330-amino-acid chain: Biotin synthase (330 aa).

In terms of domain architecture, Radical SAM core spans 53 to 276; that stretch reads NNIRLNVLLS…VFPFKELRLS (224 aa). [4Fe-4S] cluster-binding residues include C68, C72, and C75. C112, C144, C204, and R274 together coordinate [2Fe-2S] cluster.

Belongs to the radical SAM superfamily. Biotin synthase family. Homodimer. [4Fe-4S] cluster serves as cofactor. The cofactor is [2Fe-2S] cluster.

It carries out the reaction (4R,5S)-dethiobiotin + (sulfur carrier)-SH + 2 reduced [2Fe-2S]-[ferredoxin] + 2 S-adenosyl-L-methionine = (sulfur carrier)-H + biotin + 2 5'-deoxyadenosine + 2 L-methionine + 2 oxidized [2Fe-2S]-[ferredoxin]. The protein operates within cofactor biosynthesis; biotin biosynthesis; biotin from 7,8-diaminononanoate: step 2/2. In terms of biological role, catalyzes the conversion of dethiobiotin (DTB) to biotin by the insertion of a sulfur atom into dethiobiotin via a radical-based mechanism. This chain is Biotin synthase, found in Streptococcus agalactiae serotype V (strain ATCC BAA-611 / 2603 V/R).